Reading from the N-terminus, the 386-residue chain is Glucose-1-phosphate adenylyltransferase (386 aa).

Residues Tyr100, Gly165, 180 to 181 (EK), and Ser191 contribute to the alpha-D-glucose 1-phosphate site.

This sequence belongs to the bacterial/plant glucose-1-phosphate adenylyltransferase family. As to quaternary structure, homotetramer.

It catalyses the reaction alpha-D-glucose 1-phosphate + ATP + H(+) = ADP-alpha-D-glucose + diphosphate. It participates in glycan biosynthesis; glycogen biosynthesis. Functionally, involved in the biosynthesis of ADP-glucose, a building block required for the elongation reactions to produce glycogen. Catalyzes the reaction between ATP and alpha-D-glucose 1-phosphate (G1P) to produce pyrophosphate and ADP-Glc. This is Glucose-1-phosphate adenylyltransferase from Clostridium botulinum (strain Alaska E43 / Type E3).